The following is a 250-amino-acid chain: 5-oxoprolinase subunit A (250 aa).

This sequence belongs to the LamB/PxpA family. In terms of assembly, forms a complex composed of PxpA, PxpB and PxpC.

The enzyme catalyses 5-oxo-L-proline + ATP + 2 H2O = L-glutamate + ADP + phosphate + H(+). Its function is as follows. Catalyzes the cleavage of 5-oxoproline to form L-glutamate coupled to the hydrolysis of ATP to ADP and inorganic phosphate. The sequence is that of 5-oxoprolinase subunit A from Staphylococcus aureus (strain NCTC 8325 / PS 47).